Reading from the N-terminus, the 327-residue chain is Serine/threonine-protein phosphatase PP1-beta catalytic subunit (327 aa).

An N-acetylalanine modification is found at A2. 4 residues coordinate Mn(2+): D63, H65, D91, and N123. H124 serves as the catalytic Proton donor. The Mn(2+) site is built by H172 and H247. A disordered region spans residues 305 to 327 (QYGGLNSGRPVTPPRTANPPKKR).

Belongs to the PPP phosphatase family. PP-1 subfamily. Mn(2+) serves as cofactor.

The protein resides in the cytoplasm. It localises to the nucleus. The catalysed reaction is O-phospho-L-seryl-[protein] + H2O = L-seryl-[protein] + phosphate. It catalyses the reaction O-phospho-L-threonyl-[protein] + H2O = L-threonyl-[protein] + phosphate. Protein phosphatase that associates with over 200 regulatory proteins to form highly specific holoenzymes which dephosphorylate hundreds of biological targets. Protein phosphatase (PP1) is essential for cell division, it participates in the regulation of glycogen metabolism, muscle contractility and protein synthesis. Involved in regulation of ionic conductances and long-term synaptic plasticity. This Xenopus laevis (African clawed frog) protein is Serine/threonine-protein phosphatase PP1-beta catalytic subunit (ppp1cb).